The sequence spans 86 residues: Anti-adapter protein IraP (86 aa).

Residues 1–36 adopt a coiled-coil conformation; the sequence is MKNLIAELLFKLAQKEEESKELCAQVEALEIIVTAM.

It belongs to the IraP family. In terms of assembly, interacts with RssB.

The protein localises to the cytoplasm. Its function is as follows. Inhibits RpoS proteolysis by regulating RssB activity, thereby increasing the stability of the sigma stress factor RpoS especially during phosphate starvation, but also in stationary phase and during nitrogen starvation. Its effect on RpoS stability is due to its interaction with RssB, which probably blocks the interaction of RssB with RpoS, and the consequent delivery of the RssB-RpoS complex to the ClpXP protein degradation pathway. The polypeptide is Anti-adapter protein IraP (Escherichia coli O127:H6 (strain E2348/69 / EPEC)).